The sequence spans 260 residues: Ubiquinone/menaquinone biosynthesis C-methyltransferase UbiE (260 aa).

Residues Thr-83, Asp-104, and 132-133 each bind S-adenosyl-L-methionine; that span reads NA.

Belongs to the class I-like SAM-binding methyltransferase superfamily. MenG/UbiE family.

It catalyses the reaction a 2-demethylmenaquinol + S-adenosyl-L-methionine = a menaquinol + S-adenosyl-L-homocysteine + H(+). It carries out the reaction a 2-methoxy-6-(all-trans-polyprenyl)benzene-1,4-diol + S-adenosyl-L-methionine = a 5-methoxy-2-methyl-3-(all-trans-polyprenyl)benzene-1,4-diol + S-adenosyl-L-homocysteine + H(+). Its pathway is quinol/quinone metabolism; menaquinone biosynthesis; menaquinol from 1,4-dihydroxy-2-naphthoate: step 2/2. The protein operates within cofactor biosynthesis; ubiquinone biosynthesis. Methyltransferase required for the conversion of demethylmenaquinol (DMKH2) to menaquinol (MKH2) and the conversion of 2-polyprenyl-6-methoxy-1,4-benzoquinol (DDMQH2) to 2-polyprenyl-3-methyl-6-methoxy-1,4-benzoquinol (DMQH2). This Bartonella tribocorum (strain CIP 105476 / IBS 506) protein is Ubiquinone/menaquinone biosynthesis C-methyltransferase UbiE.